Consider the following 342-residue polypeptide: Holliday junction branch migration complex subunit RuvB (342 aa).

Residues 2 to 181 are large ATPase domain (RuvB-L); it reads TDNPLLSSAS…FGIPVRLQFY (180 aa). ATP-binding residues include leucine 20, arginine 21, glycine 62, lysine 65, threonine 66, threonine 67, arginine 171, tyrosine 181, and arginine 218. A Mg(2+)-binding site is contributed by threonine 66. Positions 182 to 252 are small ATPAse domain (RuvB-S); it reads SVEELERVVA…IADNALTRLE (71 aa). The tract at residues 255 to 342 is head domain (RuvB-H); it reads KIGLDLQDRR…QMPGLFGPDE (88 aa). The DNA site is built by arginine 291, arginine 310, and arginine 315.

This sequence belongs to the RuvB family. Homohexamer. Forms an RuvA(8)-RuvB(12)-Holliday junction (HJ) complex. HJ DNA is sandwiched between 2 RuvA tetramers; dsDNA enters through RuvA and exits via RuvB. An RuvB hexamer assembles on each DNA strand where it exits the tetramer. Each RuvB hexamer is contacted by two RuvA subunits (via domain III) on 2 adjacent RuvB subunits; this complex drives branch migration. In the full resolvosome a probable DNA-RuvA(4)-RuvB(12)-RuvC(2) complex forms which resolves the HJ.

Its subcellular location is the cytoplasm. The enzyme catalyses ATP + H2O = ADP + phosphate + H(+). Its function is as follows. The RuvA-RuvB-RuvC complex processes Holliday junction (HJ) DNA during genetic recombination and DNA repair, while the RuvA-RuvB complex plays an important role in the rescue of blocked DNA replication forks via replication fork reversal (RFR). RuvA specifically binds to HJ cruciform DNA, conferring on it an open structure. The RuvB hexamer acts as an ATP-dependent pump, pulling dsDNA into and through the RuvAB complex. RuvB forms 2 homohexamers on either side of HJ DNA bound by 1 or 2 RuvA tetramers; 4 subunits per hexamer contact DNA at a time. Coordinated motions by a converter formed by DNA-disengaged RuvB subunits stimulates ATP hydrolysis and nucleotide exchange. Immobilization of the converter enables RuvB to convert the ATP-contained energy into a lever motion, pulling 2 nucleotides of DNA out of the RuvA tetramer per ATP hydrolyzed, thus driving DNA branch migration. The RuvB motors rotate together with the DNA substrate, which together with the progressing nucleotide cycle form the mechanistic basis for DNA recombination by continuous HJ branch migration. Branch migration allows RuvC to scan DNA until it finds its consensus sequence, where it cleaves and resolves cruciform DNA. In Novosphingobium aromaticivorans (strain ATCC 700278 / DSM 12444 / CCUG 56034 / CIP 105152 / NBRC 16084 / F199), this protein is Holliday junction branch migration complex subunit RuvB.